The chain runs to 82 residues: MGSFSIWHWLIVLLIVVMVFGTKKLKNIGSDLGGAVKGFKDGMKDGASTDDSATTSAPAGQVTNNSAAADKTTIDVEAKHKS.

A helical transmembrane segment spans residues 1 to 21; the sequence is MGSFSIWHWLIVLLIVVMVFG. Residues 46–82 form a disordered region; that stretch reads GASTDDSATTSAPAGQVTNNSAAADKTTIDVEAKHKS. Over residues 49–67 the composition is skewed to polar residues; it reads TDDSATTSAPAGQVTNNSA. The span at 72 to 82 shows a compositional bias: basic and acidic residues; that stretch reads TTIDVEAKHKS.

This sequence belongs to the TatA/E family. In terms of assembly, the Tat system comprises two distinct complexes: a TatABC complex, containing multiple copies of TatA, TatB and TatC subunits, and a separate TatA complex, containing only TatA subunits. Substrates initially bind to the TatABC complex, which probably triggers association of the separate TatA complex to form the active translocon.

The protein resides in the cell inner membrane. Its function is as follows. Part of the twin-arginine translocation (Tat) system that transports large folded proteins containing a characteristic twin-arginine motif in their signal peptide across membranes. TatA could form the protein-conducting channel of the Tat system. This is Sec-independent protein translocase protein TatA from Acidovorax ebreus (strain TPSY) (Diaphorobacter sp. (strain TPSY)).